The sequence spans 595 residues: Adenine deaminase (595 aa).

The protein belongs to the metallo-dependent hydrolases superfamily. Adenine deaminase family. In terms of assembly, homodimer. Requires Mn(2+) as cofactor.

It carries out the reaction adenine + H2O + H(+) = hypoxanthine + NH4(+). In Serratia proteamaculans (strain 568), this protein is Adenine deaminase.